We begin with the raw amino-acid sequence, 675 residues long: MTTAPQPKQSIFSPELVRGAVRASFAKLSPRDQARNPVMFVVYLGTALTAYLTVANLVTGKPWGYELAITLLLLLTVLFANFAEGMAEARGKAQAASLRSAREDVKARRLVNGQEELVAGTALERGDLVVVEAGEMIPADGEIVEGLASVDESAITGESAPVIREAGTDHSGVTGGTKVLSDRIVIQITSGAGESFLDRMIALVEGASRQKTPNEIALSILLSGLTLIFLLAVVTLYPFTVYAGAPASAVTLIALLVCLIPTTIGGLLPAIGIAGMDRALQANVIAKSGKAVEVAGDVDVLLLDKTGTITIGNRMATKFHPLPGVTEAELAKAALLSSLADPTPEGKSIVALARQLGVDAPEPAGAEFIEFTAQTRMSGVDFPGTSIRKGAGSRISALAQERGGQLPPELAAITDEVSRQGATPLTVIENDRLLGVVALSDIIKPGIRERFEQLRRMGLRTVMITGDNPLTAEAIAKEAGVDGFLAEATPEDKMEMIKQEQASGKLVAMMGDGTNDAPALAQADVGLAMNSGTQAAKEAGNMVDLDSDPTKLLEVVEIGKGLLITRGALTTFSIANDVAKYFAILPALFVTAYPQLGVLNVMGLHSPTSAVLSAVIFNALIIPVLIPLALRGVPYQPMSAGALLNRNLLVYGGGGILVPFIAIKLIDLLIGGLMS.

A run of 4 helical transmembrane segments spans residues 38–58 (VMFVVYLGTALTAYLTVANLV), 67–87 (LAITLLLLLTVLFANFAEGMA), 216–236 (IALSILLSGLTLIFLLAVVTL), and 253–273 (IALLVCLIPTTIGGLLPAIGI). Catalysis depends on aspartate 304, which acts as the 4-aspartylphosphate intermediate. ATP-binding positions include aspartate 341, glutamate 345, 371-378 (FTAQTRMS), and lysine 389. Residues aspartate 512 and aspartate 516 each contribute to the Mg(2+) site. 3 consecutive transmembrane segments (helical) span residues 582-602 (FAILPALFVTAYPQLGVLNVM), 610-630 (AVLSAVIFNALIIPVLIPLAL), and 654-674 (GGILVPFIAIKLIDLLIGGLM).

The protein belongs to the cation transport ATPase (P-type) (TC 3.A.3) family. Type IA subfamily. The system is composed of three essential subunits: KdpA, KdpB and KdpC.

Its subcellular location is the cell membrane. It carries out the reaction K(+)(out) + ATP + H2O = K(+)(in) + ADP + phosphate + H(+). Its function is as follows. Part of the high-affinity ATP-driven potassium transport (or Kdp) system, which catalyzes the hydrolysis of ATP coupled with the electrogenic transport of potassium into the cytoplasm. This subunit is responsible for energy coupling to the transport system and for the release of the potassium ions to the cytoplasm. This Deinococcus radiodurans (strain ATCC 13939 / DSM 20539 / JCM 16871 / CCUG 27074 / LMG 4051 / NBRC 15346 / NCIMB 9279 / VKM B-1422 / R1) protein is Potassium-transporting ATPase ATP-binding subunit.